The following is a 402-amino-acid chain: F-box/kelch-repeat protein At4g39590 (402 aa).

Over residues 1–14 the composition is skewed to low complexity; it reads MFPMSSTSRSSAAN. The interval 1 to 37 is disordered; that stretch reads MFPMSSTSRSSAANNRKDPPRKKNKETPSPVTREPTS. A compositionally biased stretch (polar residues) spans 27 to 37; sequence TPSPVTREPTS. Residues 35–81 enclose the F-box domain; it reads PTSIDSLPNDLLLNCFARVSRMYYPALSRVSKRFRSIVTSPEIYNTR. 4 Kelch repeats span residues 143 to 198, 199 to 246, 255 to 300, and 302 to 341; these read NIYR…VVDG, KIYV…YRRA, KLYL…LFYW, and QGVF…DLGG.

In Arabidopsis thaliana (Mouse-ear cress), this protein is F-box/kelch-repeat protein At4g39590.